A 133-amino-acid chain; its full sequence is MALENLKPAQGSTKDRKRVGRGQGSGMGKTSTRGGKGQTARTGYKAKRGFEGGQQPLQRRLPKVGFTTQIAKPYVINVEKITKVAELAEITLDSIASVHKFPASTLKIKLIGKGASELASKIKDERITTSGRA.

The disordered stretch occupies residues 1 to 60 (MALENLKPAQGSTKDRKRVGRGQGSGMGKTSTRGGKGQTARTGYKAKRGFEGGQQPLQRR).

The protein belongs to the universal ribosomal protein uL15 family. As to quaternary structure, part of the 50S ribosomal subunit.

Binds to the 23S rRNA. The chain is Large ribosomal subunit protein uL15 from Wolinella succinogenes (strain ATCC 29543 / DSM 1740 / CCUG 13145 / JCM 31913 / LMG 7466 / NCTC 11488 / FDC 602W) (Vibrio succinogenes).